The chain runs to 423 residues: ATP-dependent Clp protease ATP-binding subunit ClpX (423 aa).

One can recognise a ClpX-type ZB domain in the interval 1 to 50; sequence MTDDTEYRCSFCGKEHHQVDDLIAGPDVRICSECVVLSCEIVEDRRNEAL. Cys9, Cys12, Cys31, and Cys34 together coordinate Zn(2+). 126-133 is a binding site for ATP; sequence PTGCGKTY.

It belongs to the ClpX chaperone family. As to quaternary structure, component of the ClpX-ClpP complex. Forms a hexameric ring that, in the presence of ATP, binds to fourteen ClpP subunits assembled into a disk-like structure with a central cavity, resembling the structure of eukaryotic proteasomes.

In terms of biological role, ATP-dependent specificity component of the Clp protease. It directs the protease to specific substrates. Can perform chaperone functions in the absence of ClpP. The sequence is that of ATP-dependent Clp protease ATP-binding subunit ClpX from Tropheryma whipplei (strain Twist) (Whipple's bacillus).